Reading from the N-terminus, the 433-residue chain is Pyrimidine-nucleoside phosphorylase (433 aa).

Residue 81-83 (KHS) coordinates phosphate. Residues Gly-88 and Thr-90 each contribute to the K(+) site. Phosphate contacts are provided by residues Thr-92, 108-110 (KMS), and Thr-120. Residues Arg-168 and Lys-187 each contribute to the substrate site. K(+) is bound by residues Leu-243, Ala-246, and Glu-255.

The protein belongs to the thymidine/pyrimidine-nucleoside phosphorylase family. Homodimer. Requires K(+) as cofactor.

The enzyme catalyses uridine + phosphate = alpha-D-ribose 1-phosphate + uracil. The catalysed reaction is thymidine + phosphate = 2-deoxy-alpha-D-ribose 1-phosphate + thymine. It catalyses the reaction 2'-deoxyuridine + phosphate = 2-deoxy-alpha-D-ribose 1-phosphate + uracil. Its function is as follows. Catalyzes phosphorolysis of the pyrimidine nucleosides uridine, thymidine and 2'-deoxyuridine with the formation of the corresponding pyrimidine base and ribose-1-phosphate. In Staphylococcus aureus (strain bovine RF122 / ET3-1), this protein is Pyrimidine-nucleoside phosphorylase (pdp).